A 414-amino-acid chain; its full sequence is MNPTKLFLVFVAFAFAIINALPVCRQGTFDPDYNGIPDYIIVGSGPGGSRAVQQCIAKGHKCTLVERGYDYFEVPYVQTPSASFLVYSSPAVRYASTVSAKNLFNLTVNAIEANVVGGASSINGLIVVITDIDNFYRELNITGWSYEELLPRYLELMTSLNRPEHTGPLDVSDTPVSDPAYQAYRNAIRQVFPNIPERLPDMNTAFANQNGTNFPGFGPPETSTKTTYMNFAGANVPIVSYRESAYMAFVHPIRNHPNFRLMTRSRVDKVVFDVCKTRARKVIVTATNYFGSQYQCELTARYGIVLAAGAIRTPQILLQSGIGPANELSALGISVVKNLTDVGRHLDDHPTIVRQYIGPIPDNYYSANINGHAYWNYQDNASVIPNWAMQIAGVPGINFKTVLSVLQIRNHVVQ.

Positions 1 to 20 (MNPTKLFLVFVAFAFAIINA) are cleaved as a signal peptide. 38–67 (DYIIVGSGPGGSRAVQQCIAKGHKCTLVER) is a binding site for FAD.

Belongs to the GMC oxidoreductase family. Requires FAD as cofactor.

The sequence is that of Putative truncated GMC-type inactive oxidoreductase R832 from Acanthamoeba polyphaga (Amoeba).